A 1072-amino-acid polypeptide reads, in one-letter code: Vacuolar membrane protease (1072 aa).

The Cytoplasmic segment spans residues M1–P9. The chain crosses the membrane as a helical span at residues G10–I30. Residues N31–M404 are Vacuolar-facing. Residues N48, N116, N119, and N128 are each glycosylated (N-linked (GlcNAc...) asparagine). The Zn(2+) site is built by H185 and D197. The active-site Proton acceptor is the E231. Residues E232, E257, and H330 each coordinate Zn(2+). Residues F405 to L425 form a helical membrane-spanning segment. Residues L426–G457 are Cytoplasmic-facing. The helical transmembrane segment at F458 to L478 threads the bilayer. Residues M479–Y492 are Vacuolar-facing. Residues S493–A513 traverse the membrane as a helical segment. Over N514 to R523 the chain is Cytoplasmic. Residues G524–L544 form a helical membrane-spanning segment. Residues E545–Y554 are Vacuolar-facing. The helical transmembrane segment at I555–L575 threads the bilayer. Topologically, residues A576–H747 are cytoplasmic. Residues G593–F713 are disordered. Positions D606–A617 are enriched in basic and acidic residues. The segment covering G643–P661 has biased composition (polar residues). Residues L748–A768 form a helical membrane-spanning segment. Residues A769–L789 are Vacuolar-facing. The chain crosses the membrane as a helical span at residues I790–F810. The Cytoplasmic portion of the chain corresponds to I811–H817. A helical membrane pass occupies residues I818–P838. Over F839–V1072 the chain is Vacuolar. N-linked (GlcNAc...) asparagine glycosylation is found at N932 and N974.

It belongs to the peptidase M28 family. Zn(2+) serves as cofactor.

The protein resides in the vacuole membrane. Its function is as follows. May be involved in vacuolar sorting and osmoregulation. In Neurospora crassa (strain ATCC 24698 / 74-OR23-1A / CBS 708.71 / DSM 1257 / FGSC 987), this protein is Vacuolar membrane protease.